Here is a 379-residue protein sequence, read N- to C-terminus: Sensor histidine kinase YhcY (379 aa).

The 189-residue stretch at 185–373 (RLAQELHDSV…KLSIRLPLKS (189 aa)) folds into the Histidine kinase domain. Phosphohistidine; by autocatalysis is present on His191.

It catalyses the reaction ATP + protein L-histidine = ADP + protein N-phospho-L-histidine.. Its function is as follows. Member of the two-component regulatory system YhcY/YhcZ. Probably activates YhcZ by phosphorylation. The chain is Sensor histidine kinase YhcY (yhcY) from Bacillus subtilis (strain 168).